Reading from the N-terminus, the 217-residue chain is UPF0319 protein VP1009 (217 aa).

Residues 1–21 (MRLKTWIVAFFLGLFGTTVNA) form the signal peptide.

It belongs to the UPF0319 family.

This chain is UPF0319 protein VP1009, found in Vibrio parahaemolyticus serotype O3:K6 (strain RIMD 2210633).